A 693-amino-acid polypeptide reads, in one-letter code: Heat shock protein homolog SSE2 (693 aa).

The segment at 653-693 is disordered; it reads LRANQETSKMNDIAEKLAEQRRARAASDDSDDNNDENMDLD. Residues 664 to 679 show a composition bias toward basic and acidic residues; sequence DIAEKLAEQRRARAAS. The segment covering 680-693 has biased composition (acidic residues); it reads DDSDDNNDENMDLD.

This sequence belongs to the heat shock protein 70 family.

Its function is as follows. Has a calcium-dependent calmodulin-binding activity. This Saccharomyces cerevisiae (strain ATCC 204508 / S288c) (Baker's yeast) protein is Heat shock protein homolog SSE2 (SSE2).